A 558-amino-acid chain; its full sequence is Ankyrin repeat protein OPG189 (558 aa).

ANK repeat units follow at residues 65–95 (YGEN…NINK), 169–205 (YGCT…DVDK), 209–239 (YGNT…NIDS), 243–272 (NRYT…NVNA), 276–304 (FGTT…ELEI), 339–368 (YNET…DFET), and 372–401 (SGCT…SLKI).

Belongs to the orthopoxvirus OPG189 protein family.

Contributes to viral release without involving rearrangement of host actin. This chain is Ankyrin repeat protein OPG189 (OPG189), found in Homo sapiens (Human).